Consider the following 146-residue polypeptide: VEWTDFERATIQDIFSKMDYEVVGPAALSRCLIVYPWTQRYFGSFGNLYNAAAIMGNPNVAKHGTIILHGLDRGVKNMDNIKETYAELSVLHSEKLHVDPDNFKLISDCLTVVVAAQFGKAFTGEVQAAFQKFMAVVVSALGRQYH.

Residues 2-146 (EWTDFERATI…VVSALGRQYH (145 aa)) enclose the Globin domain. Heme b-binding residues include His-63 and His-92.

The protein belongs to the globin family. Hb3 is a heterotetramer of two alpha-2 chains and two beta-2 chains. In terms of tissue distribution, red blood cells.

In terms of biological role, involved in oxygen transport from gills to the various peripheral tissues. The sequence is that of Hemoglobin subunit beta-2 (hbb2) from Anarhichas minor (Arctic spotted wolffish).